We begin with the raw amino-acid sequence, 611 residues long: Chaperone protein DnaK (611 aa).

A Phosphothreonine; by autocatalysis modification is found at threonine 173. 2 disordered regions span residues 525–548 (DNISEEDKSNAESKKDALKSALEG) and 573–611 (YQQAQQAQQQAQDGAQQTQNDSNVEDAEFKEVNDDEDKK). A compositionally biased stretch (basic and acidic residues) spans 529–542 (EEDKSNAESKKDAL). Positions 574 to 591 (QQAQQAQQQAQDGAQQTQ) are enriched in low complexity. The segment covering 599-611 (AEFKEVNDDEDKK) has biased composition (basic and acidic residues).

It belongs to the heat shock protein 70 family.

Acts as a chaperone. The chain is Chaperone protein DnaK from Staphylococcus haemolyticus (strain JCSC1435).